The primary structure comprises 93 residues: Small ribosomal subunit protein uS19 (93 aa).

The protein belongs to the universal ribosomal protein uS19 family.

Its function is as follows. Protein S19 forms a complex with S13 that binds strongly to the 16S ribosomal RNA. This Tropheryma whipplei (strain TW08/27) (Whipple's bacillus) protein is Small ribosomal subunit protein uS19.